A 961-amino-acid polypeptide reads, in one-letter code: G protein-coupled receptor GPR1 (961 aa).

At 1–56 (MITEGFPPNLNALKGSSLLEKRVDSLRQLNTTTVNQLLGLPGMTSTFTAPQLLQLR) the chain is on the extracellular side. A helical membrane pass occupies residues 57 to 79 (IIAITASAVSLIAGCLGMFFLSK). Topologically, residues 80–91 (MDKRRKVFRHDL) are cytoplasmic. The helical transmembrane segment at 92 to 114 (IAFLIICDFLKAFILMIYPMIIL) threads the bilayer. Over 115–133 (INNSVYATPAFFNTLGWFT) the chain is Extracellular. A helical transmembrane segment spans residues 134 to 156 (AFAIEGADMAIMIFAIHFAILIF). At 157–178 (KPNWKWRNKRSGNMEGGLYKKR) the chain is on the cytoplasmic side. Residues 179-198 (SYIWPITALVPAILASLAFI) form a helical membrane-spanning segment. The Extracellular segment spans residues 199–250 (NYNKLNDDSDTTIILDNNNYNFPDSPRQGGYKPWSAWCYLPPKPYWYKIVLS). Residues 251-273 (WGPRYFIIIFIFAVYLSIYIFIT) form a helical membrane-spanning segment. Residues 274–619 (SESKRIKAQI…KKRRAQIQKN (346 aa)) are Cytoplasmic-facing. Residue S373 is modified to Phosphoserine. The disordered stretch occupies residues 468–568 (AMYDNKNDNS…PADNIPTLSN (101 aa)). A compositionally biased stretch (low complexity) spans 502–558 (NNNNDNDNDNNNSNNNNNNNNNNNNNNNNNNNNNNNNNNNNNNSNNIKNNVDNNNTN). The chain crosses the membrane as a helical span at residues 620–642 (LRAIFIYPLSYIGIWLFPIIADA). Topologically, residues 643–822 (LQYNHEIKHG…AMLNNITAEE (180 aa)) are extracellular. Over residues 783–796 (DSNDNKRTESDETK) the composition is skewed to basic and acidic residues. Residues 783–805 (DSNDNKRTESDETKTNSSDRSLP) are disordered. The helical transmembrane segment at 823 to 843 (VEVPLFWRIIHHIPMLGGIDL) threads the bilayer. At 844-961 (DELNRLLKIR…LIAFLRNGPL (118 aa)) the chain is on the cytoplasmic side. S903 is modified (phosphoserine).

It belongs to the G-protein coupled receptor GPR1/git3 family.

It is found in the cell membrane. Functionally, seems to associate with GPA2 and act as G protein-coupled receptor that senses glucose and controls filamentous growth. It acts upstream of adenylate cyclase and is required for glucose activation of cAMP synthesis in concert with a glucose phosphorylation-dependent mechanism. The polypeptide is G protein-coupled receptor GPR1 (GPR1) (Saccharomyces cerevisiae (strain ATCC 204508 / S288c) (Baker's yeast)).